Consider the following 96-residue polypeptide: uncharacterized protein (96 aa).

Transmembrane regions (helical) follow at residues 27–47 and 52–72; these read LYTV…FFFF and MSAG…RPTI.

It localises to the cell membrane. This is an uncharacterized protein from Bacillus subtilis (strain 168).